A 335-amino-acid chain; its full sequence is Glyceraldehyde-3-phosphate dehydrogenase, cytosolic (335 aa).

NAD(+) contacts are provided by residues 13 to 14, Asp35, and Arg80; that span reads RI. D-glyceraldehyde 3-phosphate-binding positions include 151–153, Thr182, 211–212, and Arg234; these read SCT and TG. The active-site Nucleophile is the Cys152. Residue Asn316 coordinates NAD(+).

Belongs to the glyceraldehyde-3-phosphate dehydrogenase family. Homotetramer.

It localises to the cytoplasm. It catalyses the reaction D-glyceraldehyde 3-phosphate + phosphate + NAD(+) = (2R)-3-phospho-glyceroyl phosphate + NADH + H(+). It functions in the pathway carbohydrate degradation; glycolysis; pyruvate from D-glyceraldehyde 3-phosphate: step 1/5. In Gracilaria gracilis (Red alga), this protein is Glyceraldehyde-3-phosphate dehydrogenase, cytosolic (GAPC).